The chain runs to 131 residues: uncharacterized protein (131 aa).

Over residues 31 to 40 (AAATSRAAPL) the composition is skewed to low complexity. The segment at 31 to 131 (AAATSRAAPL…EAKTEQTKTP (101 aa)) is disordered.

This is an uncharacterized protein from Homo sapiens (Human).